The sequence spans 181 residues: Ribulose bisphosphate carboxylase small subunit, chloroplastic 2 (181 aa).

The transit peptide at 1-57 (MAFLIMSSAAAVATGTNAAQASMIAPFTGLKSATSFPVSRKQNLDITSIASNGGRVQ) directs the protein to the chloroplast.

Belongs to the RuBisCO small chain family. Heterohexadecamer of 8 large and 8 small subunits.

The protein localises to the plastid. Its subcellular location is the chloroplast. Functionally, ruBisCO catalyzes two reactions: the carboxylation of D-ribulose 1,5-bisphosphate, the primary event in carbon dioxide fixation, as well as the oxidative fragmentation of the pentose substrate. Both reactions occur simultaneously and in competition at the same active site. Although the small subunit is not catalytic it is essential for maximal activity. The protein is Ribulose bisphosphate carboxylase small subunit, chloroplastic 2 of Nicotiana sylvestris (Wood tobacco).